The following is a 713-amino-acid chain: U3 small nucleolar RNA-associated protein 8 (713 aa).

A Phosphothreonine modification is found at Thr-95. Residues Ser-148 and Ser-150 each carry the phosphoserine modification.

As to quaternary structure, interacts with snoRNA U3. Interacts with MPP10 and UTP25. Component of the ribosomal small subunit (SSU) processome composed of at least 40 protein subunits and snoRNA U3. In the absence of snoRNA3, forms a complex with other t-UTPs. This complex can associate with pre-18S ribosomal RNAs.

It localises to the nucleus. The protein localises to the nucleolus. In terms of biological role, involved in nucleolar processing of pre-18S ribosomal RNA. Also has a role in nuclear tRNA export. It acts between the steps of tRNA maturation/aminoacylation and its subsequent translocation out of the nucleus. Required for optimal pre-ribosomal RNA transcription by RNA polymerase I together with a subset of U3 proteins required for transcription (t-UTPs). The chain is U3 small nucleolar RNA-associated protein 8 (UTP8) from Saccharomyces cerevisiae (strain ATCC 204508 / S288c) (Baker's yeast).